Here is a 107-residue protein sequence, read N- to C-terminus: MYNLKMIGVDLTKISRFKNKSEKFAKRILSHEEFEKWEINKDHSFLATRWAIKEAIYKADNNFFEFSKINVKKDNYYWFQNFYISVSHEGDLIIAFVIKKEKNESQN.

Positions 10 and 54 each coordinate Mg(2+).

It belongs to the P-Pant transferase superfamily. AcpS family. Requires Mg(2+) as cofactor.

The protein resides in the cytoplasm. The catalysed reaction is apo-[ACP] + CoA = holo-[ACP] + adenosine 3',5'-bisphosphate + H(+). Its function is as follows. Transfers the 4'-phosphopantetheine moiety from coenzyme A to a Ser of acyl-carrier-protein. This Mycoplasma mobile (strain ATCC 43663 / 163K / NCTC 11711) (Mesomycoplasma mobile) protein is Holo-[acyl-carrier-protein] synthase.